The primary structure comprises 430 residues: Cyclin-A2 (430 aa).

At Met-1 the chain carries N-acetylmethionine. Disordered stretches follow at residues Met-1–Asp-80 and Glu-106–Ala-129. A Phosphoserine modification is found at Ser-5. Residues Glu-107–Ser-120 are compositionally biased toward basic and acidic residues.

Belongs to the cyclin family. Cyclin AB subfamily. Interacts with the CDK1 and CDK2 protein kinases to form serine/threonine kinase holoenzyme complexes. Interacts with CDK1 (hyperphosphorylated form in G1 and underphosphorylated forms in S and G2). Interacts with CDK2; the interaction increases from G1 to G2. Interacts (associated with CDK2 but not with CDK1) with SCAPER; regulates the activity of CCNA2/CDK2 by transiently maintaining CCNA2 in the cytoplasm. Forms a ternary complex with CDK2 and CDKN1B; CDKN1B inhibits the kinase activity of CDK2 through conformational rearrangements. Interacts with INCA1. Post-translationally, polyubiquitinated via 'Lys-11'-linked ubiquitin by the anaphase-promoting complex (APC/C), leading to its degradation by the proteasome. Deubiquitinated and stabilized by USP37 enables entry into S phase. Ubiquitinated during the G1 phase by the SCF(FBXO31) complex, leading to its proteasomal degradation.

It localises to the nucleus. The protein resides in the cytoplasm. Its function is as follows. Cyclin which controls both the G1/S and the G2/M transition phases of the cell cycle. Functions through the formation of specific serine/threonine kinase holoenzyme complexes with the cyclin-dependent protein kinases CDK1 and CDK2. The cyclin subunit confers the substrate specificity of these complexes and differentially interacts with and activates CDK1 and CDK2 throughout the cell cycle. In Bos taurus (Bovine), this protein is Cyclin-A2.